The chain runs to 293 residues: Nucleotide-binding protein LBA0691 (293 aa).

Residue 13–20 participates in ATP binding; sequence GMSGAGKT. GTP is bound at residue 63–66; that stretch reads DLRV.

The protein belongs to the RapZ-like family.

Displays ATPase and GTPase activities. The chain is Nucleotide-binding protein LBA0691 from Lactobacillus acidophilus (strain ATCC 700396 / NCK56 / N2 / NCFM).